Reading from the N-terminus, the 142-residue chain is Large ribosomal subunit protein uL13 (142 aa).

Belongs to the universal ribosomal protein uL13 family. Part of the 50S ribosomal subunit.

Its function is as follows. This protein is one of the early assembly proteins of the 50S ribosomal subunit, although it is not seen to bind rRNA by itself. It is important during the early stages of 50S assembly. In Halorhodospira halophila (strain DSM 244 / SL1) (Ectothiorhodospira halophila (strain DSM 244 / SL1)), this protein is Large ribosomal subunit protein uL13.